Here is a 320-residue protein sequence, read N- to C-terminus: Beta-ketoacyl-[acyl-carrier-protein] synthase III (320 aa).

Residues Cys-112 and His-245 contribute to the active site. Residues 246 to 250 (QANIR) form an ACP-binding region. The active site involves Asn-275.

The protein belongs to the thiolase-like superfamily. FabH family. Homodimer.

Its subcellular location is the cytoplasm. The catalysed reaction is malonyl-[ACP] + acetyl-CoA + H(+) = 3-oxobutanoyl-[ACP] + CO2 + CoA. It participates in lipid metabolism; fatty acid biosynthesis. Catalyzes the condensation reaction of fatty acid synthesis by the addition to an acyl acceptor of two carbons from malonyl-ACP. Catalyzes the first condensation reaction which initiates fatty acid synthesis and may therefore play a role in governing the total rate of fatty acid production. Possesses both acetoacetyl-ACP synthase and acetyl transacylase activities. Its substrate specificity determines the biosynthesis of branched-chain and/or straight-chain of fatty acids. The polypeptide is Beta-ketoacyl-[acyl-carrier-protein] synthase III (Streptococcus thermophilus (strain ATCC BAA-250 / LMG 18311)).